Reading from the N-terminus, the 275-residue chain is MEPLPGWGSAPWSQAPTDNTFRLVPCVFLLNLLQRISAQPSCRQEEFLVGDECCPMCNPGYHVKQVCSEHTGTVCAPCPPQTYTAHANGLSKCLPCGVCDPDMGLLTWQECSSWKDTVCRCIPGYFCENQDGSHCSTCLQHTTCPPGQRVEKRGTHDQDTVCADCLTGTFSLGGTQEECLPWTNCSAFQQEVRRGTNSTDTTCSSQVVYYVVSILLPLVIVGAGIAGFLICTRRHLHTSSVAKELEPFQEQQENTIRFPVTEVGFAETEEETASN.

Positions 1–38 (MEPLPGWGSAPWSQAPTDNTFRLVPCVFLLNLLQRISA) are cleaved as a signal peptide. TNFR-Cys repeat units lie at residues 41–75 (SCRQ…GTVC), 77–119 (PCPP…DTVC), and 120–162 (RCIP…DTVC). Cystine bridges form between Cys-42–Cys-53, Cys-54–Cys-67, Cys-57–Cys-75, Cys-78–Cys-93, Cys-96–Cys-111, Cys-99–Cys-119, Cys-121–Cys-138, and Cys-144–Cys-162. Asn-184 and Asn-197 each carry an N-linked (GlcNAc...) asparagine glycan. Residues 211–231 (VVSILLPLVIVGAGIAGFLIC) form a helical membrane-spanning segment.

The protein belongs to the tumor necrosis factor receptor superfamily. Interacts with TRAF2, TRAF3 and TRAF5. Interacts (via CRD1/TNFR-Cys 1) with CD160; this interaction is direct. Interacts (via CRD1/TNFR-Cys 1) with BTLA; this interaction is direct. N-glycosylated. In terms of tissue distribution, expressed at mucosal sites including colon and pulmonary epithelial cells. Expressed in naive T cells.

Its subcellular location is the cell membrane. In terms of biological role, receptor for four distinct ligands: The TNF superfamily members TNFSF14/LIGHT and homotrimeric LTA/lymphotoxin-alpha and the immunoglobulin superfamily members BTLA and CD160, altogether defining a complex stimulatory and inhibitory signaling network. Signals via the TRAF2-TRAF3 E3 ligase pathway to promote immune cell survival and differentiation. Participates in bidirectional cell-cell contact signaling between antigen presenting cells and lymphocytes. In response to ligation of TNFSF14/LIGHT, delivers costimulatory signals to T cells, promoting cell proliferation and effector functions. Interacts with CD160 on NK cells, enhancing IFNG production and anti-tumor immune response. In the context of bacterial infection, acts as a signaling receptor on epithelial cells for CD160 from intraepithelial lymphocytes, triggering the production of antimicrobial proteins and pro-inflammatory cytokines. Upon binding to CD160 on activated CD4+ T cells, down-regulates CD28 costimulatory signaling, restricting memory and alloantigen-specific immune response. May interact in cis (on the same cell) or in trans (on other cells) with BTLA. In cis interactions, appears to play an immune regulatory role inhibiting in trans interactions in naive T cells to maintain a resting state. In trans interactions, can predominate during adaptive immune response to provide survival signals to effector T cells. The sequence is that of Tumor necrosis factor receptor superfamily member 14 from Mus musculus (Mouse).